The chain runs to 494 residues: NADH-ubiquinone oxidoreductase chain 4 (494 aa).

The next 14 helical transmembrane spans lie at 6 to 26, 41 to 61, 87 to 107, 118 to 138, 141 to 161, 172 to 192, 207 to 227, 246 to 266, 280 to 300, 302 to 322, 336 to 356, 375 to 395, 415 to 435, and 460 to 480; these read IMIYLFSLLLIPLIVYFLLIY, TIGLTTLIINLILSMIIFILF, IDGISIYFLLLTTMIMPISLV, VLSFVIIILLLETLLLAVFLV, ILLFYIFFESILPPLFLLIGL, FYLFLYTLLGSLFMLLSIITM, ANFSYITQLFLFYGIFISFAV, PLAGSVILAGIVWKLRWYGIF, YTYIVYVIGVITIFYTSFSTL, TIAIKELIAYSSVSHAAVYLL, IALGLAHGFVSSGLFICVGGI, LMPIFCILFLYITLGNCGSPL, VLGVLASTSIVFSAAYTIFMF, and FILLISLVVPAVFFGIYPAVI.

Belongs to the complex I subunit 4 family.

Its subcellular location is the mitochondrion membrane. The enzyme catalyses a ubiquinone + NADH + 5 H(+)(in) = a ubiquinol + NAD(+) + 4 H(+)(out). Functionally, core subunit of the mitochondrial membrane respiratory chain NADH dehydrogenase (Complex I) that is believed to belong to the minimal assembly required for catalysis. Complex I functions in the transfer of electrons from NADH to the respiratory chain. The immediate electron acceptor for the enzyme is believed to be ubiquinone. The protein is NADH-ubiquinone oxidoreductase chain 4 (ND4) of Trichophyton rubrum (Athlete's foot fungus).